Here is a 493-residue protein sequence, read N- to C-terminus: Reticulophagy regulator 1 (493 aa).

Residues 1–52 (MASPAPPEPAEQGSPALAAAPQAPPPPTRAPPEEPEGAAPPEEGAAAGAGRQ) form a disordered region. The Cytoplasmic segment spans residues 1 to 55 (MASPAPPEPAEQGSPALAAAPQAPPPPTRAPPEEPEGAAPPEEGAAAGAGRQVEE). The span at 37 to 52 (GAAPPEEGAAAGAGRQ) shows a compositional bias: low complexity. Residues 56–76 (AAGGVAAVVTWLLGEPALWLG) form a helical membrane-spanning segment. The Lumenal segment spans residues 77-87 (GRADELLSWKR). Residues 80 to 229 (DELLSWKRPL…LLCAFLCPLF (150 aa)) form a reticulon homology domain region. The chain crosses the membrane as a helical span at residues 88–108 (PLHSLLAFVGANLVFWFLALT). Residues 109–114 (PWRVYH) lie on the Cytoplasmic side of the membrane. Residues 115–135 (LISVMILTRVIMQIIKDMILS) form a helical membrane-spanning segment. Topologically, residues 136–204 (RTRGAQLWRS…LVCSVCTFFT (69 aa)) are lumenal. At Ser-145 the chain carries Phosphoserine. Position 147 is a phosphoserine; by CAMK2B (Ser-147). Ser-149 carries the phosphoserine modification. Residues 205–225 (ILGSYIPGVILSYLLLLCAFL) form a helical membrane-spanning segment. The Cytoplasmic portion of the chain corresponds to 226–493 (CPLFKCNDIG…GFLSNLLGGH (268 aa)). Residues 315-326 (FNLSEGYTPQTD) show a composition bias toward polar residues. 2 disordered regions span residues 315-394 (FNLS…GLSL) and 435-493 (AAPS…LGGH). Basic and acidic residues predominate over residues 330–344 (DLDRPSEEVFSRDLS). Thr-353 carries the phosphothreonine modification. Basic and acidic residues predominate over residues 368 to 388 (ELKRKKEQLDGGPRRSTEKKS). The span at 441-463 (EDTDTEEGDDFELLDQSELDQIE) shows a compositional bias: acidic residues. Positions 449–454 (DDFELL) match the LIR motif motif. The segment covering 467-486 (GLSQDQEAEAQQNKKSSGFL) has biased composition (polar residues).

This sequence belongs to the RETREG family. Homooligomer; oligomerization is enhanced following endoplasmic reticulum stress and is mediated by the reticulon homology domain. Interacts with ATG8 family modifier proteins MAP1LC3A, MAP1LC3B, GABARAP, GABARAPL1 and GABARAPL2. Post-translationally, phosphorylation at Ser-147 by CAMK2B enhances oligomerization and membrane scission and reticulophagy activity.

Its subcellular location is the golgi apparatus. The protein resides in the cis-Golgi network membrane. It is found in the endoplasmic reticulum membrane. In terms of biological role, endoplasmic reticulum (ER)-anchored autophagy regulator which mediates ER delivery into lysosomes through sequestration into autophagosomes. Promotes membrane remodeling and ER scission via its membrane bending capacity and targets the fragments into autophagosomes via interaction with ATG8 family proteins. Active under basal conditions. Required for collagen quality control in a LIR motif-dependent manner. Required for long-term survival of nociceptive and autonomic ganglion neurons. This is Reticulophagy regulator 1 (RETREG1) from Bos taurus (Bovine).